The following is a 162-amino-acid chain: Dihydrofolate reductase (162 aa).

The region spanning 3-161 (KITLIAACAE…TSYAFVHYLR (159 aa)) is the DHFR domain. Position 7 to 9 (7 to 9 (IAA)) interacts with substrate. NADP(+) contacts are provided by residues 8–9 (AA) and 16–21 (IGAGNA). D29 lines the substrate pocket. 45-48 (GRKT) lines the NADP(+) pocket. R60 contacts substrate. NADP(+) contacts are provided by residues 65–68 (ISRQ) and 98–103 (MGGAQI). T117 is a substrate binding site.

This sequence belongs to the dihydrofolate reductase family.

It carries out the reaction (6S)-5,6,7,8-tetrahydrofolate + NADP(+) = 7,8-dihydrofolate + NADPH + H(+). The protein operates within cofactor biosynthesis; tetrahydrofolate biosynthesis; 5,6,7,8-tetrahydrofolate from 7,8-dihydrofolate: step 1/1. Key enzyme in folate metabolism. Catalyzes an essential reaction for de novo glycine and purine synthesis, and for DNA precursor synthesis. This is Dihydrofolate reductase (folA) from Neisseria meningitidis serogroup A / serotype 4A (strain DSM 15465 / Z2491).